The following is a 191-amino-acid chain: UPF0669 protein C6orf120 (191 aa).

Positions 1 to 30 (MAAPRGRAAPWTTALLLLLASQVLSPGSCA) are cleaved as a signal peptide. N53 carries an N-linked (GlcNAc...) asparagine glycan.

This sequence belongs to the UPF0669 family. Mainly expressed in hepatocytes and some weak expression in germinal center cells of lymph nodes.

It is found in the secreted. May be involved in induction of apoptosis in CD4(+) T-cells, but not CD8(+) T-cells or hepatocytes. The protein is UPF0669 protein C6orf120 (C6orf120) of Homo sapiens (Human).